The sequence spans 341 residues: Basic membrane protein D (341 aa).

The signal sequence occupies residues 1–16; sequence MLKKVYYFLIFLFIVA. The N-palmitoyl cysteine moiety is linked to residue cysteine 17. A lipid anchor (S-diacylglycerol cysteine) is attached at cysteine 17.

This sequence belongs to the BMP lipoprotein family. As to quaternary structure, monomer.

Its subcellular location is the cell inner membrane. In terms of biological role, binds adenosine and inosine. May be part of an ABC-type nucleoside uptake system involved in the purine salvage pathway. The polypeptide is Basic membrane protein D (Borreliella burgdorferi (strain JD1) (Borrelia burgdorferi)).